The sequence spans 663 residues: MKTNLSSQITLHRVSPRYYRPENAFEKSVLTRLEKIPTDIYESVEEGANYIACEIAQTIREKQKAGRFCVLALPGGNSPSHVYSELIRMHKEEGLSFRNVIVFNMYEYYPLTADAINSNFNALKEMLLDHVDIDKQNIFTPDGTIAKDTIFEYCRLYEQRIESFGGIDIALLGIGRVGNIAFNEPGSRLNSTTRLILLDNASRNEASKIFGTIENTPISSITMGVSTILGAKKVYLLAWGENKAAMIKECVEGPISDTIPASYLQTHNNAHVAIDLSASMNLTRIQRPWLVTSCEWNDKLIRSAIVWLCQLTGKPILKLTNKDYNENGLSELLALFGSAYNVNIKIFNDLQHTITGWPGGKPNADDTYRPERAKPYPKRVVIFSPHPDDDVISMGGTLRRLVEQKHEVHVAYETSGNIAVGDEEVVRFMHFINGFNQIFNNSEDLVISEKYAEIRKFLKEKKDGDMDSRDILTIKGLIRRGEARTASSYNNIPLDRVHFLDLPFYETGKIQKNPISEADVEIVRNLLREIKPHQIFVAGDLADPHGTHRVCTDAVFAAVDLEKEEGAKWLKDCRIWMYRGAWAEWEIENIEMAVPISPEELRAKRNSILKHQSQMESAPFLGNDERLFWQRSEDRNRGTATLYDQLGLASYEAMEAFVEYIPL.

A glucosamine-6-phosphate deaminase-like region spans residues 1 to 290 (MKTNLSSQIT…NLTRIQRPWL (290 aa)). Glu184 is an active-site residue.

This sequence in the N-terminal section; belongs to the glucosamine/galactosamine-6-phosphate isomerase family. NagB subfamily.

The protein is Putative glucosamine-6-phosphate deaminase-like protein BT_0258 of Bacteroides thetaiotaomicron (strain ATCC 29148 / DSM 2079 / JCM 5827 / CCUG 10774 / NCTC 10582 / VPI-5482 / E50).